A 378-amino-acid polypeptide reads, in one-letter code: Rhodopsin (378 aa).

The Extracellular segment spans residues 1–53 (MMSIASGPSHAAYTWTAQGGGFGNQTVVDKVPPEMLHLVDAHWYQFPPMNPLW). Residue Asn-24 is glycosylated (N-linked (GlcNAc...) asparagine). A helical transmembrane segment spans residues 54–78 (HAILGFVIGILGMISVIGNGMVIYI). Residues 79 to 90 (FTTTKSLRTPSN) are Cytoplasmic-facing. The chain crosses the membrane as a helical span at residues 91 to 115 (LLVINLAISDFLMMLSMSPAMVINC). The Extracellular segment spans residues 116–130 (YYETWVLGPLVCELY). Cys-127 and Cys-204 are disulfide-bonded. The chain crosses the membrane as a helical span at residues 131-150 (GLTGSLFGCGSIWTMTMIAF). Residues 151 to 169 (DRYNVIVKGLSAKPMTING) are Cytoplasmic-facing. A helical membrane pass occupies residues 170–193 (ALLRILGIWFFSLGWTIAPMFGWN). Residues 194-217 (RYVPEGNMTACGTDYLTKDLLSRS) lie on the Extracellular side of the membrane. Residue Asn-200 is glycosylated (N-linked (GlcNAc...) asparagine). A helical transmembrane segment spans residues 218-245 (YILVYSFFCYFLPLFLIIYSYFFIIQAV). Over 246–280 (AAHEKNMREQAKKMNVASLRSAENQSTSAECKLAK) the chain is Cytoplasmic. A helical transmembrane segment spans residues 281–304 (VALMTISLWFMAWTPYLVINYAGI). The Extracellular portion of the chain corresponds to 305 to 311 (FETVKIN). A helical transmembrane segment spans residues 312–336 (PLFTIWGSLFAKANAVYNPIVYGIS). Lys-323 is subject to N6-(retinylidene)lysine. The Cytoplasmic portion of the chain corresponds to 337–378 (HPKYRAALFQRFPSLACSSGPAGADTLSTTTTVTEGTEKPAA). The tract at residues 356 to 378 (GPAGADTLSTTTTVTEGTEKPAA) is disordered. Residues 362-371 (TLSTTTTVTE) show a composition bias toward low complexity.

It belongs to the G-protein coupled receptor 1 family. Opsin subfamily. Phosphorylated on some or all of the serine and threonine residues present in the C-terminal region.

It is found in the membrane. Functionally, visual pigments are the light-absorbing molecules that mediate vision. They consist of an apoprotein, opsin, covalently linked to cis-retinal. The sequence is that of Rhodopsin from Cataglyphis bombycina (Saharan silver ant).